The chain runs to 173 residues: CASP-like protein 3A1 (173 aa).

Met-1 is a topological domain (cytoplasmic). The helical transmembrane segment at 2–22 threads the bilayer; the sequence is VDIALRSAVVAFMVVSLSAMF. Residues 23 to 48 are Extracellular-facing; it reads TSTQHSEVHIIGFSIPVSLRWNRSQP. An N-linked (GlcNAc...) asparagine glycan is attached at Asn-44. A helical membrane pass occupies residues 49-69; sequence FEFLVVVELLICAYAFVQFVY. At 70–84 the chain is on the cytoplasmic side; sequence QSVVLAKNAVPTRRC. The chain crosses the membrane as a helical span at residues 85 to 105; sequence IWVQLAADQVCAYLVLAAAAA. At 106-140 the chain is on the extracellular side; the sequence is AAGASRTNKSGFQSLGMQNIKVPGVCIVLDKFCNR. The N-linked (GlcNAc...) asparagine glycan is linked to Asn-113. The chain crosses the membrane as a helical span at residues 141–161; sequence ATIAIIFTLLAAGASGISVTL. The Cytoplasmic portion of the chain corresponds to 162–173; sequence DVYMLTLTYYMG.

This sequence belongs to the Casparian strip membrane proteins (CASP) family. As to quaternary structure, homodimer and heterodimers.

Its subcellular location is the cell membrane. The sequence is that of CASP-like protein 3A1 from Pteridium aquilinum subsp. aquilinum (Bracken fern).